We begin with the raw amino-acid sequence, 301 residues long: GTPase Era (301 aa).

An Era-type G domain is found at 7–175 (YCGFIAIVGR…AAIVRKHLPE (169 aa)). Residues 15–22 (GRPNVGKS) are G1. 15-22 (GRPNVGKS) provides a ligand contact to GTP. Residues 41–45 (QTTRH) form a G2 region. The tract at residues 62–65 (DTPG) is G3. GTP contacts are provided by residues 62-66 (DTPGL) and 124-127 (NKVD). The segment at 124–127 (NKVD) is G4. The segment at 154–156 (ISA) is G5. The region spanning 206–283 (LGAELPYSVT…HLELWVKVKS (78 aa)) is the KH type-2 domain.

This sequence belongs to the TRAFAC class TrmE-Era-EngA-EngB-Septin-like GTPase superfamily. Era GTPase family. Monomer.

Its subcellular location is the cytoplasm. It is found in the cell inner membrane. Functionally, an essential GTPase that binds both GDP and GTP, with rapid nucleotide exchange. Plays a role in 16S rRNA processing and 30S ribosomal subunit biogenesis and possibly also in cell cycle regulation and energy metabolism. The polypeptide is GTPase Era (Escherichia coli O1:K1 / APEC).